A 535-amino-acid polypeptide reads, in one-letter code: Probable deoxycholate-binding periplasmic protein YgiS (535 aa).

Positions 1–20 (MYTRNLLWLVSLVSAAPLYA) are cleaved as a signal peptide.

Belongs to the bacterial solute-binding protein 5 family.

The protein resides in the periplasm. Probably part of a deoxycholate transport system. Its expression in the presence of deoxycholate in a ygiS deletion mutant increases intracellular deoxycholate levels and decreases cell growth; higher expression in the presence of deoxycholate inhibits cell growth completely. Bile acid detergents such as deoxycholate are important for host defense against bacterial growth in the gall bladder and duodenum. The polypeptide is Probable deoxycholate-binding periplasmic protein YgiS (ygiS) (Escherichia coli (strain K12)).